The primary structure comprises 505 residues: 2,3-bisphosphoglycerate-independent phosphoglycerate mutase (505 aa).

Mn(2+) is bound by residues Asp-12 and Ser-62. Catalysis depends on Ser-62, which acts as the Phosphoserine intermediate. Substrate-binding positions include His-123, 153-154 (RD), Arg-185, Arg-191, 257-260 (RPDR), and Lys-330. Residues Asp-397, His-401, Asp-438, His-439, and His-456 each contribute to the Mn(2+) site.

Belongs to the BPG-independent phosphoglycerate mutase family. As to quaternary structure, monomer. Mn(2+) serves as cofactor.

The enzyme catalyses (2R)-2-phosphoglycerate = (2R)-3-phosphoglycerate. The protein operates within carbohydrate degradation; glycolysis; pyruvate from D-glyceraldehyde 3-phosphate: step 3/5. In terms of biological role, catalyzes the interconversion of 2-phosphoglycerate and 3-phosphoglycerate. This is 2,3-bisphosphoglycerate-independent phosphoglycerate mutase from Staphylococcus saprophyticus subsp. saprophyticus (strain ATCC 15305 / DSM 20229 / NCIMB 8711 / NCTC 7292 / S-41).